The primary structure comprises 193 residues: Dual-action ribosomal maturation protein DarP (193 aa).

A compositionally biased stretch (basic and acidic residues) spans 1–10 (MRGRDEDTGE). 2 disordered regions span residues 1 to 20 (MRGR…SQQR) and 171 to 193 (QEQG…EDDE). Over residues 181-193 (GLEDGESALEDDE) the composition is skewed to acidic residues.

This sequence belongs to the DarP family.

Its subcellular location is the cytoplasm. In terms of biological role, member of a network of 50S ribosomal subunit biogenesis factors which assembles along the 30S-50S interface, preventing incorrect 23S rRNA structures from forming. Promotes peptidyl transferase center (PTC) maturation. The chain is Dual-action ribosomal maturation protein DarP from Xanthomonas oryzae pv. oryzae (strain MAFF 311018).